Consider the following 488-residue polypeptide: Intron-encoded DNA endonuclease I-AniI (488 aa).

The cobA exon 1 encoded stretch occupies residues 1–169 (MRILKSHPLL…DIVEFIWGGL (169 aa)). Residues 170–488 (YTDEPQCGDV…SEKIKIPSNY (319 aa)) form a cobA intron encoded region.

The protein in the C-terminal section; belongs to the LAGLIDADG endonuclease family. As to quaternary structure, homodimer. Requires Mg(2+) as cofactor. Post-translationally, the mature protein may arise from proteolytic cleavage of an in-frame translation of cobA exon 1 plus intron, containing the I-AniI open reading frame. Cleavage may take place close to Met-213 resulting in an active endonuclease/maturase of about 30 kDa.

The protein resides in the mitochondrion. Mitochondrial DNA endonuclease and mRNA maturase involved in intron homing and required for splicing of the cytochrome b (cobA) gene intron, containing its own coding sequence. The protein stimulates the intrinsic ribozyme activity of the intron through binding to and stabilizing specific secondary and tertiary structure elements in the RNA. As an endonuclease it introduces a specific double-strand break at the junction of the two exons the cobA gene and thus mediates the insertion of an intron, containing its own coding sequence (group I intron), into an intronless gene. Recognizes with limited specificity and cleaves the sequence 5'-GAGGAGGTTTCTCTGTA-3'. The proteins RNA and DNA recognition and binding surfaces are independent. The chain is Intron-encoded DNA endonuclease I-AniI (I-AniI) from Emericella nidulans (Aspergillus nidulans).